The primary structure comprises 344 residues: Calcium homeostasis modulator protein 3 (344 aa).

The Cytoplasmic portion of the chain corresponds to 1 to 20; sequence MDKFRMLFQHFQSSSESVMN. Residues 9–36 are central pore; it reads QHFQSSSESVMNGICLLLAAVTVKLYSS. Residues 21 to 36 traverse the membrane as a helical segment; it reads GICLLLAAVTVKLYSS. At 37-48 the chain is on the extracellular side; sequence FDFNCPCLVHYN. 2 disulfide bridges follow: cysteine 41–cysteine 126 and cysteine 43–cysteine 157. The chain crosses the membrane as a helical span at residues 49–71; that stretch reads ALYGLGLLLTPPLALFLCGLLAN. At 72-98 the chain is on the cytoplasmic side; sequence RQSVVMVEEWRRPAGHRRKDPGIIRYM. A lipid anchor (S-palmitoyl cysteine) is attached at cysteine 99. A helical transmembrane segment spans residues 99–124; sequence CSSVLQRALAAPLVWILLALLDGKCF. Residues 125–176 lie on the Extracellular side of the membrane; that stretch reads VCAFSSSVDPEKFLDFANMTPSQVQLFLAKVPCKEDELVRDSPARKAVSRYL. Residue asparagine 142 is glycosylated (N-linked (GlcNAc...) asparagine). The chain crosses the membrane as a helical span at residues 177-202; the sequence is RCLSQAIGWSVTLLLIIAAFLARCLR. S-palmitoyl cysteine attachment occurs at residues cysteine 200 and cysteine 204. Over 203–344 the chain is Cytoplasmic; sequence PCFDQTVFLQ…GTRLSQHTDV (142 aa).

It belongs to the CALHM family. Associates with CALHM1 as a pore-forming subunit in a hetero-hexameric channel complex. N-glycosylated. Post-translationally, palmitoylated by ZDHHC3 and ZDHHC15. Palmitoylation positively regulates CALHM1:CALHM3 channel conductance. Specifically expressed in circumvallate taste bud cells.

The protein resides in the basolateral cell membrane. The enzyme catalyses ATP(in) = ATP(out). It catalyses the reaction Ca(2+)(in) = Ca(2+)(out). The catalysed reaction is Na(+)(in) = Na(+)(out). It carries out the reaction K(+)(in) = K(+)(out). The enzyme catalyses chloride(in) = chloride(out). Its function is as follows. Pore-forming subunit of gustatory voltage-gated ion channels required for sensory perception of sweet, bitter and umami tastes. With CALHM1 forms a fast-activating voltage-gated ATP-release channel in type II taste bud cells, ATP acting as a neurotransmitter to activate afferent neural gustatory pathways. Acts both as a voltage-gated and calcium-activated ion channel: mediates neuronal excitability in response to membrane depolarization and low extracellular Ca(2+) concentration. Has poor ion selectivity and forms a wide pore (around 14 Angstroms) that mediates permeation of small ions including Ca(2+), Na(+), K(+) and Cl(-), as well as larger ions such as ATP(4-). The chain is Calcium homeostasis modulator protein 3 from Homo sapiens (Human).